A 213-amino-acid polypeptide reads, in one-letter code: Uridine kinase (213 aa).

An ATP-binding site is contributed by 15 to 22 (GASASGKS).

Belongs to the uridine kinase family.

The protein localises to the cytoplasm. It carries out the reaction uridine + ATP = UMP + ADP + H(+). The enzyme catalyses cytidine + ATP = CMP + ADP + H(+). It participates in pyrimidine metabolism; CTP biosynthesis via salvage pathway; CTP from cytidine: step 1/3. The protein operates within pyrimidine metabolism; UMP biosynthesis via salvage pathway; UMP from uridine: step 1/1. This Klebsiella pneumoniae (strain 342) protein is Uridine kinase.